The sequence spans 70 residues: MMSKLGALLTICLLLFSLTAVPLDGDQHADQPAQRLQDRIPTEDHPLFDPNKRCCDDSECSYSCWPCCYG.

A signal peptide spans 1–20 (MMSKLGALLTICLLLFSLTA). Residues 21 to 53 (VPLDGDQHADQPAQRLQDRIPTEDHPLFDPNKR) constitute a propeptide that is removed on maturation. Intrachain disulfides connect cysteine 54-cysteine 68, cysteine 55-cysteine 64, and cysteine 60-cysteine 67. Position 66 is a 4-hydroxyproline (proline 66). Residue tyrosine 69 is modified to Tyrosine amide.

This sequence belongs to the conotoxin M superfamily. In terms of tissue distribution, expressed by the venom duct.

It is found in the secreted. This chain is Conotoxin TxMMSK-02, found in Conus textile (Cloth-of-gold cone).